The following is a 30-amino-acid chain: Brevinin-2Rj (30 aa).

C24 and C30 form a disulfide bridge.

As to expression, expressed by the skin glands.

It localises to the secreted. Its function is as follows. Antimicrobial peptide. This is Brevinin-2Rj from Pelophylax ridibundus (Marsh frog).